The chain runs to 349 residues: Thylakoid lumenal 29 kDa protein, chloroplastic (349 aa).

Ser155 bears the Phosphoserine mark.

Belongs to the peroxidase family.

Its subcellular location is the plastid. The protein resides in the chloroplast thylakoid lumen. The sequence is that of Thylakoid lumenal 29 kDa protein, chloroplastic (TL29) from Arabidopsis thaliana (Mouse-ear cress).